The chain runs to 438 residues: Dolichyl-diphosphooligosaccharide--protein glycosyltransferase 48 kDa subunit (438 aa).

Residues 1–25 (MASLRLSVLLVSVSWLLLLVSGLRA) form the signal peptide. The Lumenal portion of the chain corresponds to 26–408 (GPRTLVLMEN…QYERFIPSAY (383 aa)). Residues 409 to 429 (PYYASAFSVMFGLFIFSIVFL) form a helical membrane-spanning segment. The Cytoplasmic segment spans residues 430–438 (HMKEKEKSD).

Belongs to the DDOST 48 kDa subunit family. Component of the oligosaccharyltransferase (OST) complex.

It is found in the endoplasmic reticulum membrane. Its pathway is protein modification; protein glycosylation. In terms of biological role, subunit of the oligosaccharyl transferase (OST) complex that catalyzes the initial transfer of a defined glycan (Glc(3)Man(9)GlcNAc(2) in eukaryotes) from the lipid carrier dolichol-pyrophosphate to an asparagine residue within an Asn-X-Ser/Thr consensus motif in nascent polypeptide chains, the first step in protein N-glycosylation. N-glycosylation occurs cotranslationally and the complex associates with the Sec61 complex at the channel-forming translocon complex that mediates protein translocation across the endoplasmic reticulum (ER). All subunits are required for a maximal enzyme activity. Required for the assembly of both SST3A- and SS3B-containing OST complexes. The sequence is that of Dolichyl-diphosphooligosaccharide--protein glycosyltransferase 48 kDa subunit from Xenopus laevis (African clawed frog).